The chain runs to 463 residues: MTLRIFDTGTRSLRDFEPIRPGHASIYLCGATPQTQPHIGHVRSGVAFDILRRWLIAQGLDVAFVRNVTDIDDKILTKAAENGRPWWEWVSTYEREFTWAYNQLGVLPPSVEPRATGHVTQMVEYMQRLIDNGFAYAAEGSVYFDVAAWTAAEGSDYGSLSGNRVEEMEQGETEITGKRGAHDFALWKAAKPGEPSWPTPWGDGRPGWHLECSAMATWYLGGEFDIHCGGLDLQFPHHENEIAQSHAAGDGFANYWMHNHWVTMSGEKMSKSLGNVLSVPNILDKVRPVELRYYLGSAHYRSMLEYSEGALLEAAAGYRRIEAFLTKVADVEAGQWTTEFEEAMNDDLAVPRALAEIHTQVRHGNSALAAGDVDKAHEIAASVRAMAAVLGVDPLDEKWLDSAASDSSTNAALDVLVQAELQRRTEARAAKDWATADEVRDRLHAAGITVTDTPDGPTWALNN.

A Zn(2+)-binding site is contributed by cysteine 29. Positions 31–41 (ATPQTQPHIGH) match the 'HIGH' region motif. Residues cysteine 212, histidine 237, and glutamate 241 each coordinate Zn(2+). Residues 268–272 (KMSKS) carry the 'KMSKS' region motif. Lysine 271 lines the ATP pocket.

This sequence belongs to the class-I aminoacyl-tRNA synthetase family. Monomer. Requires Zn(2+) as cofactor.

The protein localises to the cytoplasm. It catalyses the reaction tRNA(Cys) + L-cysteine + ATP = L-cysteinyl-tRNA(Cys) + AMP + diphosphate. This chain is Cysteine--tRNA ligase, found in Corynebacterium diphtheriae (strain ATCC 700971 / NCTC 13129 / Biotype gravis).